A 210-amino-acid polypeptide reads, in one-letter code: FMN-dependent NADH:quinone oxidoreductase (210 aa).

Residues Ser-10 and 16–18 each bind FMN; that span reads SRS.

The protein belongs to the azoreductase type 1 family. Homodimer. FMN is required as a cofactor.

The enzyme catalyses 2 a quinone + NADH + H(+) = 2 a 1,4-benzosemiquinone + NAD(+). It catalyses the reaction N,N-dimethyl-1,4-phenylenediamine + anthranilate + 2 NAD(+) = 2-(4-dimethylaminophenyl)diazenylbenzoate + 2 NADH + 2 H(+). Functionally, quinone reductase that provides resistance to thiol-specific stress caused by electrophilic quinones. In terms of biological role, also exhibits azoreductase activity. Catalyzes the reductive cleavage of the azo bond in aromatic azo compounds to the corresponding amines. The chain is FMN-dependent NADH:quinone oxidoreductase from Kineococcus radiotolerans (strain ATCC BAA-149 / DSM 14245 / SRS30216).